Here is a 130-residue protein sequence, read N- to C-terminus: C-X-C motif chemokine 5 (130 aa).

A signal peptide spans 1 to 37; that stretch reads MSFQLRSSARIPSRSCSSFTLLAFLLLFTLPQHRAQA. Cystine bridges form between Cys-50–Cys-76 and Cys-52–Cys-93.

This sequence belongs to the intercrine alpha (chemokine CxC) family. As to quaternary structure, monomer. Homodimer.

Its subcellular location is the secreted. May participate in the recruitment of inflammatory cells by injured or infected tissue. In Rattus norvegicus (Rat), this protein is C-X-C motif chemokine 5 (Cxcl5).